The following is a 219-amino-acid chain: Cytidylate kinase (219 aa).

ATP is bound at residue Gly-21 to Thr-29.

This sequence belongs to the cytidylate kinase family. Type 1 subfamily.

It is found in the cytoplasm. It catalyses the reaction CMP + ATP = CDP + ADP. It carries out the reaction dCMP + ATP = dCDP + ADP. The chain is Cytidylate kinase from Rickettsia rickettsii (strain Iowa).